A 600-amino-acid chain; its full sequence is UvrABC system protein C (600 aa).

A GIY-YIG domain is found at 15-100; the sequence is NSTGVYQYFN…IKQLHPKYNI (86 aa). Positions 203–238 constitute a UVR domain; the sequence is SVLLKNLEKQMLVLAQNENYEEAAKVRDQIAMIKDL.

The protein belongs to the UvrC family. As to quaternary structure, interacts with UvrB in an incision complex.

It localises to the cytoplasm. In terms of biological role, the UvrABC repair system catalyzes the recognition and processing of DNA lesions. UvrC both incises the 5' and 3' sides of the lesion. The N-terminal half is responsible for the 3' incision and the C-terminal half is responsible for the 5' incision. This Campylobacter jejuni subsp. jejuni serotype O:2 (strain ATCC 700819 / NCTC 11168) protein is UvrABC system protein C.